Reading from the N-terminus, the 1318-residue chain is MLDVNFFDELRIGLASAEDIRNWSYGEVKKPETINYRTLKPEKDGLFCEKIFGPTRDWECYCGKYKRVRFKGIICERCGVEVTRAKVRRERMGHIELAAPVTHIWYFKGVPSRLGYLLDLAPKDLEKIIYFAAYVIVGVDEELRHNELSTLEAEMQVEKKTVADQRDADLEARAQKLEADIAELEAEGAKSDVRRKVKDGGEREMRQLRDRAQRELDRLDEIWTTFTKLSVKQLIIDELLYRELVDRYGEYFTGAMGAESIQILMQNFDLDAEAESLRETIRSGKGQKKLRALKRLKVVAAFQTNGNSPMGMVLNAVPVIPPELRPMVQLDGGRFATSDLNDLYRRVINRNNRLKRLIDLGAPEIIVNNEKRMLQESVDALFDNGRRGRPVTGPGNRPLKSLSDLLKGKQGRFRQNLLGKRVDYSGRSVIVVGPQLKLHQCGLPKLMALELFKPFVMKRLVDLNHAQNIKSAKRMVERKRVQVWDVLEEVIAEHPVLLNRAPTLHRLGIQAFEPQLVEGKAIQLHPLVCEAFNADFDGDQMAVHLPLSAEAQAEARILMLSSNNILSPASGRPLAMPRLDMVTGLFHLTRLDEGVTGELVAPTNDEAEQGVYSSPAEAQMAVDRGALSVQAQIKVRLTQQRPPRDLENELFPEGWKYGDGWTATTTLGRVLFNELLPADYPFVNEQMPKKRQATIINDLAERYPMIVVAQTVDKLKDVGFYWATRSGVTVSISDVLVPPEKPAIIEDFEAQADKIEKQYQRGALDKKERNSALVTIWQEATDKVGKAMEAHFPDSNPIPMIVKSGAAGNMTQVRSLAGMKGLVTNPKGEFIPRPIKSSFKEGLTVLEYFINTHGARKGLADTALRTADSGYLTRRLVDVSQDVIVREVDCGTERGIVTTIAEKQADGTMIRDAHVETSTYARTLAADAVDANGTVIVERGHDLGDPAIDALLEAGITTVKVRSVLTCTTGTGVCATCYGRSMATGKLVDIGEAVGIVAAQSIGEPGTQLTMRTFHQGGVAGDDITGGLPRVQELFEARVPKGKAPIADVTGRVQLEDGDRFYKITIVPDDGGEEVVYDKLSKRQRLRVFKHADGRESLLADGDHVEVGQQLMEGAADPHEVLRVMGPRQVQIHLVNEVQEVYRSQGVSIHDKHIEVIVRQMLRRVTIIDSGATEFLPGSLTERAEFESANRRVVAEGGEPAAGRPVLMGITKASLATDSWLSAASFQETTRVLTDAAINCRSDKLIGLKENVIIGKLIPAGTGINRYRNIQVQPTEEARAAAYAVPSYDDQYYSPDGFGQNTGAAVPLDDYGFSNDYR.

Residues Cys-60, Cys-62, Cys-75, and Cys-78 each coordinate Zn(2+). Mg(2+) is bound by residues Asp-535, Asp-537, and Asp-539. Cys-890, Cys-967, Cys-974, and Cys-977 together coordinate Zn(2+).

This sequence belongs to the RNA polymerase beta' chain family. In terms of assembly, the RNAP catalytic core consists of 2 alpha, 1 beta, 1 beta' and 1 omega subunit. When a sigma factor is associated with the core the holoenzyme is formed, which can initiate transcription. It depends on Mg(2+) as a cofactor. Zn(2+) is required as a cofactor.

The enzyme catalyses RNA(n) + a ribonucleoside 5'-triphosphate = RNA(n+1) + diphosphate. Functionally, DNA-dependent RNA polymerase catalyzes the transcription of DNA into RNA using the four ribonucleoside triphosphates as substrates. The sequence is that of DNA-directed RNA polymerase subunit beta' from Rhodococcus erythropolis (strain PR4 / NBRC 100887).